Reading from the N-terminus, the 139-residue chain is Lysozyme (139 aa).

A signal peptide spans 1-19 (MTKYVILLAVLAFALHCDA). In terms of domain architecture, C-type lysozyme spans 20-139 (KRFTRCGLVQ…QHGLPDISDC (120 aa)). Disulfide bonds link Cys25–Cys139, Cys46–Cys129, Cys81–Cys95, and Cys91–Cys109. Residues Glu51 and Asp69 contribute to the active site.

This sequence belongs to the glycosyl hydrolase 22 family.

It catalyses the reaction Hydrolysis of (1-&gt;4)-beta-linkages between N-acetylmuramic acid and N-acetyl-D-glucosamine residues in a peptidoglycan and between N-acetyl-D-glucosamine residues in chitodextrins.. Lysozymes have primarily a bacteriolytic function; those in tissues and body fluids are associated with the monocyte-macrophage system and enhance the activity of immunoagents. The polypeptide is Lysozyme (Hyalophora cecropia (Cecropia moth)).